Consider the following 338-residue polypeptide: Lipoate-protein ligase A (338 aa).

Residues Pro29–Val216 form the BPL/LPL catalytic domain. Residues Arg71, Gly76 to Phe79, and Lys134 contribute to the ATP site. Residue Lys134 coordinates (R)-lipoate.

Belongs to the LplA family. In terms of assembly, monomer.

The protein localises to the cytoplasm. The catalysed reaction is L-lysyl-[lipoyl-carrier protein] + (R)-lipoate + ATP = N(6)-[(R)-lipoyl]-L-lysyl-[lipoyl-carrier protein] + AMP + diphosphate + H(+). It participates in protein modification; protein lipoylation via exogenous pathway; protein N(6)-(lipoyl)lysine from lipoate: step 1/2. Its pathway is protein modification; protein lipoylation via exogenous pathway; protein N(6)-(lipoyl)lysine from lipoate: step 2/2. Its function is as follows. Catalyzes both the ATP-dependent activation of exogenously supplied lipoate to lipoyl-AMP and the transfer of the activated lipoyl onto the lipoyl domains of lipoate-dependent enzymes. This is Lipoate-protein ligase A from Cronobacter sakazakii (strain ATCC BAA-894) (Enterobacter sakazakii).